We begin with the raw amino-acid sequence, 111 residues long: Iron-sulfur cluster insertion protein ErpA (111 aa).

Residues Cys39, Cys103, and Cys105 each coordinate iron-sulfur cluster.

The protein belongs to the HesB/IscA family. As to quaternary structure, homodimer. Requires iron-sulfur cluster as cofactor.

Its function is as follows. Required for insertion of 4Fe-4S clusters for at least IspG. The sequence is that of Iron-sulfur cluster insertion protein ErpA from Acinetobacter baumannii (strain SDF).